The primary structure comprises 123 residues: WAP four-disulfide core domain protein 5 (123 aa).

The N-terminal stretch at 1 to 24 (MRIQSLLLLGVLLAVGSQLPAAFG) is a signal peptide. WAP domains lie at 27–73 (KGEK…CVPR) and 74–121 (ISVK…RDPA). 8 disulfide bridges follow: Cys34–Cys62, Cys41–Cys66, Cys49–Cys61, Cys55–Cys70, Cys81–Cys109, Cys88–Cys113, Cys96–Cys108, and Cys102–Cys117.

The protein resides in the secreted. Functionally, putative acid-stable proteinase inhibitor. The sequence is that of WAP four-disulfide core domain protein 5 (WFDC5) from Callithrix jacchus (White-tufted-ear marmoset).